The following is a 516-amino-acid chain: Maturase K (516 aa).

The protein belongs to the intron maturase 2 family. MatK subfamily.

Its subcellular location is the plastid. It localises to the chloroplast. Usually encoded in the trnK tRNA gene intron. Probably assists in splicing its own and other chloroplast group II introns. The sequence is that of Maturase K from Cypripedium calceolus (Yellow lady's slipper).